The sequence spans 336 residues: Formimidoylglutamase (336 aa).

Residues His-129, Asp-160, His-162, Asp-164, Asp-257, and Asp-259 each coordinate Mn(2+).

It belongs to the arginase family. It depends on Mn(2+) as a cofactor.

It catalyses the reaction N-formimidoyl-L-glutamate + H2O = formamide + L-glutamate. Its pathway is amino-acid degradation; L-histidine degradation into L-glutamate; L-glutamate from N-formimidoyl-L-glutamate (hydrolase route): step 1/1. Functionally, catalyzes the conversion of N-formimidoyl-L-glutamate to L-glutamate and formamide. This is Formimidoylglutamase from Vibrio vulnificus (strain YJ016).